Consider the following 281-residue polypeptide: Bifunctional protein FolD (281 aa).

NADP(+) contacts are provided by residues G165–G167, T192, and V233.

It belongs to the tetrahydrofolate dehydrogenase/cyclohydrolase family. As to quaternary structure, homodimer.

It catalyses the reaction (6R)-5,10-methylene-5,6,7,8-tetrahydrofolate + NADP(+) = (6R)-5,10-methenyltetrahydrofolate + NADPH. The enzyme catalyses (6R)-5,10-methenyltetrahydrofolate + H2O = (6R)-10-formyltetrahydrofolate + H(+). It functions in the pathway one-carbon metabolism; tetrahydrofolate interconversion. Catalyzes the oxidation of 5,10-methylenetetrahydrofolate to 5,10-methenyltetrahydrofolate and then the hydrolysis of 5,10-methenyltetrahydrofolate to 10-formyltetrahydrofolate. In Corynebacterium diphtheriae (strain ATCC 700971 / NCTC 13129 / Biotype gravis), this protein is Bifunctional protein FolD.